A 348-amino-acid polypeptide reads, in one-letter code: UDP-3-O-acylglucosamine N-acyltransferase (348 aa).

H243 serves as the catalytic Proton acceptor.

Belongs to the transferase hexapeptide repeat family. LpxD subfamily. In terms of assembly, homotrimer.

It catalyses the reaction a UDP-3-O-[(3R)-3-hydroxyacyl]-alpha-D-glucosamine + a (3R)-hydroxyacyl-[ACP] = a UDP-2-N,3-O-bis[(3R)-3-hydroxyacyl]-alpha-D-glucosamine + holo-[ACP] + H(+). Its pathway is bacterial outer membrane biogenesis; LPS lipid A biosynthesis. In terms of biological role, catalyzes the N-acylation of UDP-3-O-acylglucosamine using 3-hydroxyacyl-ACP as the acyl donor. Is involved in the biosynthesis of lipid A, a phosphorylated glycolipid that anchors the lipopolysaccharide to the outer membrane of the cell. The polypeptide is UDP-3-O-acylglucosamine N-acyltransferase (Hahella chejuensis (strain KCTC 2396)).